Reading from the N-terminus, the 203-residue chain is Linker for activation of T-cells family member 2 (203 aa).

The Extracellular segment spans residues 1 to 6 (MSAELE). A helical; Signal-anchor for type III membrane protein transmembrane segment spans residues 7–27 (LLWPVSGLLLLLLGATAWLCV). S-palmitoyl cysteine attachment occurs at residues Cys26 and Cys29. At 28–203 (HCSRPGVKRN…NGDVAAAENI (176 aa)) the chain is on the cytoplasmic side. Phosphotyrosine is present on Tyr59. Ser60 and Ser95 each carry phosphoserine. Tyr139, Tyr160, and Tyr192 each carry phosphotyrosine. A disordered region spans residues 171–203 (ESKRTMGAPMSLSGSPDEEPDYVNGDVAAAENI).

As to quaternary structure, when phosphorylated, interacts with GRB2. May also interact with SOS1, GAB1 and CBL. Phosphorylated on tyrosines following cross-linking of BCR in B-cells, high affinity IgG receptor (FCGR1) in myeloid cells, or high affinity IgE receptor (FCER1) in mast cells; which induces the recruitment of GRB2. Strongly expressed in testis. Expressed in heart, spleen and lung. Present in B-cells and mast cells (at protein level).

It localises to the cell membrane. Its function is as follows. Involved in FCER1 (high affinity immunoglobulin epsilon receptor)-mediated signaling in mast cells. May also be involved in BCR (B-cell antigen receptor)-mediated signaling in B-cells and FCGR1 (high affinity immunoglobulin gamma Fc receptor I)-mediated signaling in myeloid cells. Couples activation of these receptors and their associated kinases with distal intracellular events through the recruitment of GRB2. The protein is Linker for activation of T-cells family member 2 (Lat2) of Mus musculus (Mouse).